The chain runs to 357 residues: MAEFKFTDLVEPVAVDKKTALRITVLGGGSFGTAMANLAARNGCDTMIWIRDAETAEEINKTHINKRYLPDFTLESSLRAVSDLEQAVCDRDIILVAIPSHSFRDVLKQIAPYITAQAVVSLTKGVEAKTFSFMSDIIREELPEVPYGVLSGPNLAKEIMAGMPSGTVIASDSELVRYAVQHALHSALFRVFGSDDVHGVELGGALKNIYAVAMGIGAAYKIGENTKSMILTRALAEMSRFAVKQGANPLTFLGLSGVGDLFATCNSPLSRNYQIGYALGSGKTLEQASKELGQTAEGINTIVQVRGKAQELDVYMPITNALYEVIFEGAPPLNIALSLMKNGHRSDVEFVLPHHEV.

NADPH-binding residues include serine 30, phenylalanine 31, arginine 51, and lysine 124. Sn-glycerol 3-phosphate-binding residues include lysine 124 and glycine 152. Alanine 156 provides a ligand contact to NADPH. Sn-glycerol 3-phosphate contacts are provided by lysine 207, aspartate 260, serine 270, arginine 271, and asparagine 272. Lysine 207 serves as the catalytic Proton acceptor. Arginine 271 contributes to the NADPH binding site. NADPH is bound at residue glutamate 297.

It belongs to the NAD-dependent glycerol-3-phosphate dehydrogenase family.

It localises to the cytoplasm. It carries out the reaction sn-glycerol 3-phosphate + NAD(+) = dihydroxyacetone phosphate + NADH + H(+). The enzyme catalyses sn-glycerol 3-phosphate + NADP(+) = dihydroxyacetone phosphate + NADPH + H(+). It functions in the pathway membrane lipid metabolism; glycerophospholipid metabolism. Catalyzes the reduction of the glycolytic intermediate dihydroxyacetone phosphate (DHAP) to sn-glycerol 3-phosphate (G3P), the key precursor for phospholipid synthesis. This is Glycerol-3-phosphate dehydrogenase [NAD(P)+] from Acinetobacter baumannii (strain AB307-0294).